The primary structure comprises 594 residues: UvrABC system protein C (594 aa).

The 87-residue stretch at 13 to 99 folds into the GIY-YIG domain; the sequence is SSSGVYQYFD…IKQLKPKYNI (87 aa). The region spanning 205–240 is the UVR domain; the sequence is DRLIKELELKMERLSSNLRFEEALIYRDRIAKIQKI.

This sequence belongs to the UvrC family. Interacts with UvrB in an incision complex.

It is found in the cytoplasm. Functionally, the UvrABC repair system catalyzes the recognition and processing of DNA lesions. UvrC both incises the 5' and 3' sides of the lesion. The N-terminal half is responsible for the 3' incision and the C-terminal half is responsible for the 5' incision. This chain is UvrABC system protein C, found in Helicobacter pylori (strain J99 / ATCC 700824) (Campylobacter pylori J99).